The following is a 212-amino-acid chain: ATP-dependent dethiobiotin synthetase BioD (212 aa).

Residue 12 to 17 (DCGKTF) participates in ATP binding. Thr-16 contacts Mg(2+). Lys-33 is a catalytic residue. Ser-37 contributes to the substrate binding site. Residues Asp-50, 110 to 113 (EGAG), and 170 to 171 (NC) contribute to the ATP site. Asp-50 and Glu-110 together coordinate Mg(2+).

The protein belongs to the dethiobiotin synthetase family. In terms of assembly, homodimer. It depends on Mg(2+) as a cofactor.

Its subcellular location is the cytoplasm. The catalysed reaction is (7R,8S)-7,8-diammoniononanoate + CO2 + ATP = (4R,5S)-dethiobiotin + ADP + phosphate + 3 H(+). Its pathway is cofactor biosynthesis; biotin biosynthesis; biotin from 7,8-diaminononanoate: step 1/2. In terms of biological role, catalyzes a mechanistically unusual reaction, the ATP-dependent insertion of CO2 between the N7 and N8 nitrogen atoms of 7,8-diaminopelargonic acid (DAPA, also called 7,8-diammoniononanoate) to form a ureido ring. The sequence is that of ATP-dependent dethiobiotin synthetase BioD from Legionella pneumophila subsp. pneumophila (strain Philadelphia 1 / ATCC 33152 / DSM 7513).